A 507-amino-acid chain; its full sequence is Cobyric acid synthase (507 aa).

The region spanning 251 to 448 (DIDIAVVHLP…LHGLFDSDAF (198 aa)) is the GATase cobBQ-type domain. Cysteine 332 serves as the catalytic Nucleophile. Histidine 440 is an active-site residue.

This sequence belongs to the CobB/CobQ family. CobQ subfamily.

It functions in the pathway cofactor biosynthesis; adenosylcobalamin biosynthesis. Functionally, catalyzes amidations at positions B, D, E, and G on adenosylcobyrinic A,C-diamide. NH(2) groups are provided by glutamine, and one molecule of ATP is hydrogenolyzed for each amidation. The chain is Cobyric acid synthase from Klebsiella pneumoniae (strain 342).